Here is a 569-residue protein sequence, read N- to C-terminus: ATP-dependent RNA helicase dhh1 (569 aa).

Residues 1–16 (MSDQLADQLKATSLSS) show a composition bias toward polar residues. Positions 1-39 (MSDQLADQLKATSLSSGPEDWKKGLNLPARDTRQQTEDV) are disordered. The Q motif signature appears at 45–73 (LDWEDFIHDRDLLMGIFEAGFEKPSPIQE). The Helicase ATP-binding domain occupies 76-246 (IPVALTGRDI…DKNMTSPYEI (171 aa)). Residue 89 to 96 (AKNGTGKT) coordinates ATP. Positions 194–197 (DEAD) match the DEAD box motif. Positions 256–416 (GITQYYAFVE…PIPQTIDKSL (161 aa)) constitute a Helicase C-terminal domain. A disordered region spans residues 436–569 (AQQPQQQLQQ…GQPQGPLSAQ (134 aa)). A compositionally biased stretch (low complexity) spans 437–482 (QQPQQQLQQSQRPQQSQQQQHFSTQTQPSNQLPPQQGNQQLGFNPQ). The span at 495-520 (GDWQGQNGRQNGTGASNNQPRPTNYQ) shows a compositional bias: polar residues. A compositionally biased stretch (gly residues) spans 529 to 542 (SRGGRGRGFQGQGG). The span at 543-569 (RQNQNYGGQRGPRTQGQGQPQGPLSAQ) shows a compositional bias: low complexity.

It belongs to the DEAD box helicase family. DDX6/DHH1 subfamily.

The protein resides in the cytoplasm. It is found in the P-body. The enzyme catalyses ATP + H2O = ADP + phosphate + H(+). ATP-dependent RNA helicase involved in mRNA turnover, and more specifically in mRNA decapping. Is involved in G1/S DNA-damage checkpoint recovery, probably through the regulation of the translational status of a subset of mRNAs. May also have a role in translation and mRNA nuclear export. The protein is ATP-dependent RNA helicase dhh1 (drh-10) of Neurospora crassa (strain ATCC 24698 / 74-OR23-1A / CBS 708.71 / DSM 1257 / FGSC 987).